Consider the following 259-residue polypeptide: Phosphatidylserine decarboxylase proenzyme (259 aa).

Catalysis depends on serine 183, which acts as the Schiff-base intermediate with substrate; via pyruvic acid. Residue serine 183 is modified to Pyruvic acid (Ser); by autocatalysis.

It belongs to the phosphatidylserine decarboxylase family. PSD-A subfamily. Heterodimer of a large membrane-associated beta subunit and a small pyruvoyl-containing alpha subunit. Pyruvate is required as a cofactor. Is synthesized initially as an inactive proenzyme. Formation of the active enzyme involves a self-maturation process in which the active site pyruvoyl group is generated from an internal serine residue via an autocatalytic post-translational modification. Two non-identical subunits are generated from the proenzyme in this reaction, and the pyruvate is formed at the N-terminus of the alpha chain, which is derived from the carboxyl end of the proenzyme. The post-translation cleavage follows an unusual pathway, termed non-hydrolytic serinolysis, in which the side chain hydroxyl group of the serine supplies its oxygen atom to form the C-terminus of the beta chain, while the remainder of the serine residue undergoes an oxidative deamination to produce ammonia and the pyruvoyl prosthetic group on the alpha chain.

Its subcellular location is the cell membrane. It carries out the reaction a 1,2-diacyl-sn-glycero-3-phospho-L-serine + H(+) = a 1,2-diacyl-sn-glycero-3-phosphoethanolamine + CO2. The protein operates within phospholipid metabolism; phosphatidylethanolamine biosynthesis; phosphatidylethanolamine from CDP-diacylglycerol: step 2/2. In terms of biological role, catalyzes the formation of phosphatidylethanolamine (PtdEtn) from phosphatidylserine (PtdSer). The chain is Phosphatidylserine decarboxylase proenzyme from Neisseria gonorrhoeae (strain NCCP11945).